Here is a 220-residue protein sequence, read N- to C-terminus: Elongation factor Ts, chloroplastic (220 aa).

It belongs to the EF-Ts family.

The protein localises to the plastid. It is found in the chloroplast. Associates with the EF-Tu.GDP complex and induces the exchange of GDP to GTP. It remains bound to the aminoacyl-tRNA.EF-Tu.GTP complex up to the GTP hydrolysis stage on the ribosome. This chain is Elongation factor Ts, chloroplastic (tsf), found in Pyropia yezoensis (Susabi-nori).